The following is a 315-amino-acid chain: tRNA dimethylallyltransferase (315 aa).

14 to 21 (GATATGKS) is an ATP binding site. 16–21 (TATGKS) contacts substrate. The interval 39 to 42 (DSRQ) is interaction with substrate tRNA.

It belongs to the IPP transferase family. As to quaternary structure, monomer. It depends on Mg(2+) as a cofactor.

It catalyses the reaction adenosine(37) in tRNA + dimethylallyl diphosphate = N(6)-dimethylallyladenosine(37) in tRNA + diphosphate. In terms of biological role, catalyzes the transfer of a dimethylallyl group onto the adenine at position 37 in tRNAs that read codons beginning with uridine, leading to the formation of N6-(dimethylallyl)adenosine (i(6)A). The chain is tRNA dimethylallyltransferase from Microcystis aeruginosa (strain NIES-843 / IAM M-2473).